We begin with the raw amino-acid sequence, 464 residues long: Glutamate--tRNA ligase (464 aa).

A 'HIGH' region motif is present at residues 12 to 22; sequence PSPTGYLHIGG. Residues 254 to 258 carry the 'KMSKS' region motif; that stretch reads KLSKR. K257 contributes to the ATP binding site.

This sequence belongs to the class-I aminoacyl-tRNA synthetase family. Glutamate--tRNA ligase type 1 subfamily. As to quaternary structure, monomer.

Its subcellular location is the cytoplasm. It carries out the reaction tRNA(Glu) + L-glutamate + ATP = L-glutamyl-tRNA(Glu) + AMP + diphosphate. Catalyzes the attachment of glutamate to tRNA(Glu) in a two-step reaction: glutamate is first activated by ATP to form Glu-AMP and then transferred to the acceptor end of tRNA(Glu). The protein is Glutamate--tRNA ligase of Mycoplasma mobile (strain ATCC 43663 / 163K / NCTC 11711) (Mesomycoplasma mobile).